Reading from the N-terminus, the 343-residue chain is MAKRQLNRRQNWRIEKIQGERAARAAKRESATLETLEGGDLGPEQTGLVIAHFGVQVEVEAQEGEVTGQVFRCHLRANLPALVTGDRVVWRAGNQGIGVIVAQLPRTTELRRPDSRGQLKPVAANVDLIVIVFAPMPEPHANLIDRYLVAAEHAGIRPLLLLNKADLIDEQNAPALNALLAVYRTLGYPVLEVSAHHGDGMQSLQSQLDGHISVFVGQSGVGKSSLVNSLLPETDTRVGPLSEVSGQGTHTTTTARLFHFPRGGDLIDSPGIREFGLGHVSRADVEAGFIEFNDLIGTCRFRDCKHDREPGCALLKGLEDGRVQQQRMNSYRSIIASLPQDSY.

The 160-residue stretch at 116–275 (RGQLKPVAAN…LIDSPGIREF (160 aa)) folds into the CP-type G domain. Residues 163–166 (NKAD) and 217–225 (GQSGVGKSS) contribute to the GTP site. C299, C304, H306, and C312 together coordinate Zn(2+).

This sequence belongs to the TRAFAC class YlqF/YawG GTPase family. RsgA subfamily. Monomer. Associates with 30S ribosomal subunit, binds 16S rRNA. It depends on Zn(2+) as a cofactor.

It localises to the cytoplasm. One of several proteins that assist in the late maturation steps of the functional core of the 30S ribosomal subunit. Helps release RbfA from mature subunits. May play a role in the assembly of ribosomal proteins into the subunit. Circularly permuted GTPase that catalyzes slow GTP hydrolysis, GTPase activity is stimulated by the 30S ribosomal subunit. This Pseudomonas syringae pv. syringae (strain B728a) protein is Small ribosomal subunit biogenesis GTPase RsgA.